A 224-amino-acid chain; its full sequence is Envelope glycoprotein L (224 aa).

A signal peptide spans 1-22 (MGILGWVGLIAVGVLCVRGGLS). The interval 20 to 161 (GLSSTEYVIR…FDYSRTRRCV (142 aa)) is interaction with gH. The segment at 20-161 (GLSSTEYVIR…FDYSRTRRCV (142 aa)) is interaction with gL. Positions 23-201 (STEYVIRSRV…LTTPPPIIAT (179 aa)) constitute a gL alphaherpesvirus-type domain. Disulfide bonds link C44-C76 and C149-C160. The segment at 161–224 (VGRQDLGPTN…RRRRPHSRRL (64 aa)) is disordered. N170 is a glycosylation site (N-linked (GlcNAc...) asparagine; by host). Over residues 213–224 (KSRRRRPHSRRL) the composition is skewed to basic residues.

Belongs to the herpesviridae glycoprotein L (gL) family. Alphaherpesvirinae gL subfamily. In terms of assembly, interacts with glycoprotein H (gH); this interaction is necessary for the correct processing and cell surface expression of gH. The heterodimer gH/gL seems to interact with gB trimers during fusion. N-glycosylated, O-glycosylated, and sialylated.

Its subcellular location is the virion membrane. The protein resides in the host cell membrane. It is found in the host Golgi apparatus. The protein localises to the host trans-Golgi network. Its function is as follows. The heterodimer glycoprotein H-glycoprotein L is required for the fusion of viral and plasma membranes leading to virus entry into the host cell. Acts as a functional inhibitor of gH and maintains gH in an inhibited form. Upon binding to host integrins, gL dissociates from gH leading to activation of the viral fusion glycoproteins gB and gH. The protein is Envelope glycoprotein L of Human herpesvirus 1 (strain KOS) (HHV-1).